The chain runs to 121 residues: Prefoldin subunit beta (121 aa).

The protein belongs to the prefoldin subunit beta family. As to quaternary structure, heterohexamer of two alpha and four beta subunits.

It is found in the cytoplasm. Its function is as follows. Molecular chaperone capable of stabilizing a range of proteins. Seems to fulfill an ATP-independent, HSP70-like function in archaeal de novo protein folding. In Methanothermobacter thermautotrophicus (strain ATCC 29096 / DSM 1053 / JCM 10044 / NBRC 100330 / Delta H) (Methanobacterium thermoautotrophicum), this protein is Prefoldin subunit beta (pfdB).